We begin with the raw amino-acid sequence, 124 residues long: Fluoride-specific ion channel FluC (124 aa).

4 helical membrane-spanning segments follow: residues 4 to 24, 35 to 55, 62 to 82, and 102 to 122; these read LIFV…ISIF, FGTL…YALG, PEIK…FSTF, and IALN…LVFS. Na(+) is bound by residues Gly74 and Thr77.

The protein belongs to the fluoride channel Fluc/FEX (TC 1.A.43) family.

The protein resides in the cell inner membrane. The enzyme catalyses fluoride(in) = fluoride(out). Na(+) is not transported, but it plays an essential structural role and its presence is essential for fluoride channel function. Functionally, fluoride-specific ion channel. Important for reducing fluoride concentration in the cell, thus reducing its toxicity. The sequence is that of Fluoride-specific ion channel FluC from Shewanella loihica (strain ATCC BAA-1088 / PV-4).